A 180-amino-acid polypeptide reads, in one-letter code: MSRIGRKPIQIPDNVNVTVENRQIIVKGPKGQLSYSLPEGIGITIDNKTMLITRESDLSKQRALHGLARSLISNMVTGVSQGFTKALQIYGVGYRAQVSGNKIILNIGYSHPVEFVLPEGIKATVDEKQTTITLHGIDKQLVGQIAANLRAIRPPDAYKGKGIRYTDEVLKLKPGKTGKK.

Belongs to the universal ribosomal protein uL6 family. As to quaternary structure, part of the 50S ribosomal subunit.

This protein binds to the 23S rRNA, and is important in its secondary structure. It is located near the subunit interface in the base of the L7/L12 stalk, and near the tRNA binding site of the peptidyltransferase center. This is Large ribosomal subunit protein uL6 from Thermodesulfovibrio yellowstonii (strain ATCC 51303 / DSM 11347 / YP87).